The primary structure comprises 604 residues: Elongation factor 4 (604 aa).

Residues 8 to 190 (DKIRNFSIIA…AIVNRLPPPR (183 aa)) form the tr-type G domain. Residues 20–25 (DHGKST) and 137–140 (NKID) contribute to the GTP site.

The protein belongs to the TRAFAC class translation factor GTPase superfamily. Classic translation factor GTPase family. LepA subfamily.

The protein localises to the cell inner membrane. It catalyses the reaction GTP + H2O = GDP + phosphate + H(+). Its function is as follows. Required for accurate and efficient protein synthesis under certain stress conditions. May act as a fidelity factor of the translation reaction, by catalyzing a one-codon backward translocation of tRNAs on improperly translocated ribosomes. Back-translocation proceeds from a post-translocation (POST) complex to a pre-translocation (PRE) complex, thus giving elongation factor G a second chance to translocate the tRNAs correctly. Binds to ribosomes in a GTP-dependent manner. In Hyphomonas neptunium (strain ATCC 15444), this protein is Elongation factor 4.